The chain runs to 113 residues: Ribosome-binding factor A (113 aa).

This sequence belongs to the RbfA family. In terms of assembly, monomer. Binds 30S ribosomal subunits, but not 50S ribosomal subunits or 70S ribosomes.

Its subcellular location is the cytoplasm. Its function is as follows. One of several proteins that assist in the late maturation steps of the functional core of the 30S ribosomal subunit. Associates with free 30S ribosomal subunits (but not with 30S subunits that are part of 70S ribosomes or polysomes). Required for efficient processing of 16S rRNA. May interact with the 5'-terminal helix region of 16S rRNA. The polypeptide is Ribosome-binding factor A (Lactococcus lactis subsp. cremoris (Streptococcus cremoris)).